The following is a 485-amino-acid chain: Glutamyl-tRNA(Gln) amidotransferase subunit A (485 aa).

Active-site charge relay system residues include K79 and S154. S178 acts as the Acyl-ester intermediate in catalysis.

This sequence belongs to the amidase family. GatA subfamily. As to quaternary structure, heterotrimer of A, B and C subunits.

It carries out the reaction L-glutamyl-tRNA(Gln) + L-glutamine + ATP + H2O = L-glutaminyl-tRNA(Gln) + L-glutamate + ADP + phosphate + H(+). Its function is as follows. Allows the formation of correctly charged Gln-tRNA(Gln) through the transamidation of misacylated Glu-tRNA(Gln) in organisms which lack glutaminyl-tRNA synthetase. The reaction takes place in the presence of glutamine and ATP through an activated gamma-phospho-Glu-tRNA(Gln). This chain is Glutamyl-tRNA(Gln) amidotransferase subunit A, found in Clostridium botulinum (strain ATCC 19397 / Type A).